The following is a 302-amino-acid chain: Probable protein ABIL4 (302 aa).

Disordered stretches follow at residues 151–179 and 220–256; these read PSTGHKRTQAARLQTDNGQDSKPKPYPSA and LLGKDIPASPMHKPLQPNGNTSFDAKKNVGSKDQPGF. A compositionally biased stretch (polar residues) spans 161 to 170; sequence ARLQTDNGQD.

Belongs to the ABI family. As to quaternary structure, binds SCAR.

The protein resides in the cytoplasm. The protein localises to the cytoskeleton. Involved in regulation of actin and microtubule organization. Part of a WAVE complex that activates the Arp2/3 complex. This is Probable protein ABIL4 from Oryza sativa subsp. japonica (Rice).